Consider the following 352-residue polypeptide: Molybdenum import ATP-binding protein ModC (352 aa).

Residues 1 to 229 form the ABC transporter domain; it reads MLELNFSQTL…SVMNPWLPKE (229 aa). An ATP-binding site is contributed by 31–38; that stretch reads GVSGAGKT. One can recognise a Mop domain in the interval 289-352; that stretch reads QTSIRNVLRA…AQIKSVSITA (64 aa).

Belongs to the ABC transporter superfamily. Molybdate importer (TC 3.A.1.8) family. As to quaternary structure, the complex is composed of two ATP-binding proteins (ModC), two transmembrane proteins (ModB) and a solute-binding protein (ModA).

Its subcellular location is the cell inner membrane. It carries out the reaction molybdate(out) + ATP + H2O = molybdate(in) + ADP + phosphate + H(+). Its function is as follows. Part of the ABC transporter complex ModABC involved in molybdenum import. Responsible for energy coupling to the transport system. The protein is Molybdenum import ATP-binding protein ModC of Shigella dysenteriae serotype 1 (strain Sd197).